The chain runs to 437 residues: Zinc finger protein 491 (437 aa).

A C2H2-type 1; degenerate zinc finger spans residues Lys35–Asp59. The C2H2-type 2; degenerate zinc-finger motif lies at Phe103–His125. C2H2-type zinc fingers lie at residues Tyr131–His153, Tyr159–His181, Tyr187–His209, Tyr215–His237, Tyr243–His265, His271–His293, Tyr299–His321, Asp327–His349, Tyr355–His377, Tyr383–His405, and Tyr411–His433.

Belongs to the krueppel C2H2-type zinc-finger protein family.

Its subcellular location is the nucleus. May be involved in transcriptional regulation. This chain is Zinc finger protein 491 (ZNF491), found in Homo sapiens (Human).